Reading from the N-terminus, the 180-residue chain is Probable galaptin lec-8 (180 aa).

Residues 11-138 (SAHAIREQLR…AAHIDEISFS (128 aa)) form the Galectin domain.

This is Probable galaptin lec-8 (lec-8) from Caenorhabditis elegans.